A 248-amino-acid polypeptide reads, in one-letter code: Small ribosomal subunit protein uS3 (248 aa).

Positions Ile-38–Lys-106 constitute a KH type-2 domain. Positions Ser-214–Gly-248 are disordered. Basic residues predominate over residues Arg-231–Ala-242.

This sequence belongs to the universal ribosomal protein uS3 family. In terms of assembly, part of the 30S ribosomal subunit. Forms a tight complex with proteins S10 and S14.

Functionally, binds the lower part of the 30S subunit head. Binds mRNA in the 70S ribosome, positioning it for translation. In Corynebacterium aurimucosum (strain ATCC 700975 / DSM 44827 / CIP 107346 / CN-1) (Corynebacterium nigricans), this protein is Small ribosomal subunit protein uS3.